The following is a 384-amino-acid chain: MKPHFRNPVERMYQDTFSDNFYNRPILSRRNTVWLCYEVKTKGPSRPPLDAKIFRGQVYSKLKYHPEMRFFHWFSKWRKLHRDQEYEVTWYISWSPCTKCTRDVATFLAEDPKVTLTIFVARLYYFWDPDYQEALRSLCQKRDGPRATMKIMNYDEFQHCWSKFVYSQRELFEPWNNLPKYYILLHIMLGEILRHSMDPPTFTSNFNNELWVRGRHETYLCYEVERLHNDTRVLLNQRRGFLCNQAPHKHGFLEGRHAELCFLDVIPFWKLDLHQDYRVTCFTSWSPCFSCAQEMAKFISNNKHVSLCIFAARIYDDQGRCQEGLRTLAKAGAEISIMTYSEFKHCWDTFVDHQGCPFQPWDGLEEHSQALSGRLRAILQNQGN.

An essential for cytoplasmic localization region spans residues 1-60 (MKPHFRNPVERMYQDTFSDNFYNRPILSRRNTVWLCYEVKTKGPSRPPLDAKIFRGQVYS). 2 consecutive CMP/dCMP-type deaminase domains span residues 29–138 (RRNT…LRSL) and 214–328 (GRHE…LRTL). T32 carries the post-translational modification Phosphothreonine; by PKA. H65, C97, and C100 together coordinate Zn(2+). The necessary for homooligomerization stretch occupies residues 209 to 336 (ELWVRGRHET…TLAKAGAEIS (128 aa)). Positions 213–215 (RGR) are interaction with DNA. The residue at position 218 (T218) is a Phosphothreonine; by PKA and CAMK2. H257 contributes to the Zn(2+) binding site. E259 acts as the Proton donor in catalysis. C288 and C291 together coordinate Zn(2+). An interaction with DNA region spans residues 313-320 (RIYDDQGR).

Belongs to the cytidine and deoxycytidylate deaminase family. Homodimer. Homooligomer. Can bind RNA to form ribonucleoprotein complexes of high-molecular-mass (HMM) or low-molecular-mass (LMM). HMM is inactive and heterogeneous in protein composition because of binding nonselectively to cellular RNAs, which in turn are associated with variety of cellular proteins. The LMM form which is enzymatically active has few or no RNAs associated. Its ability to form homooligomer is distinct from its ability to assemble into HMM. Interacts with APOBEC3B, APOBEC3F, MOV10, AGO2, EIF4E, EIF4ENIF1, DCP2 and DDX6 in an RNA-dependent manner. Interacts with AGO1, AGO3 and PKA/PRKACA. Requires Zn(2+) as cofactor.

It is found in the cytoplasm. It localises to the nucleus. Its subcellular location is the P-body. The catalysed reaction is a 2'-deoxycytidine in single-stranded DNA + H2O + H(+) = a 2'-deoxyuridine in single-stranded DNA + NH4(+). Its function is as follows. DNA deaminase (cytidine deaminase) which acts as an inhibitor of retrovirus replication and retrotransposon mobility via deaminase-dependent and -independent mechanisms. After the penetration of retroviral nucleocapsids into target cells of infection and the initiation of reverse transcription, it can induce the conversion of cytosine to uracil in the minus-sense single-strand viral DNA, leading to G-to-A hypermutations in the subsequent plus-strand viral DNA. The resultant detrimental levels of mutations in the proviral genome, along with a deamination-independent mechanism that works prior to the proviral integration, together exert efficient antiretroviral effects in infected target cells. Selectively targets single-stranded DNA and does not deaminate double-stranded DNA or single- or double-stranded RNA. May inhibit the mobility of LTR retrotransposons. The protein is DNA dC-&gt;dU-editing enzyme APOBEC-3G (APOBEC3G) of Pan paniscus (Pygmy chimpanzee).